A 405-amino-acid chain; its full sequence is Cysteine desulfurase IscS (405 aa).

Pyridoxal 5'-phosphate-binding positions include 75–76 (AT), Asn-156, Gln-184, and 204–206 (SAH). At Lys-207 the chain carries N6-(pyridoxal phosphate)lysine. Thr-244 is a pyridoxal 5'-phosphate binding site. Cys-329 serves as the catalytic Cysteine persulfide intermediate. A [2Fe-2S] cluster-binding site is contributed by Cys-329.

This sequence belongs to the class-V pyridoxal-phosphate-dependent aminotransferase family. NifS/IscS subfamily. Homodimer. Forms a heterotetramer with IscU, interacts with other sulfur acceptors. Pyridoxal 5'-phosphate is required as a cofactor.

The protein resides in the cytoplasm. The enzyme catalyses (sulfur carrier)-H + L-cysteine = (sulfur carrier)-SH + L-alanine. Its pathway is cofactor biosynthesis; iron-sulfur cluster biosynthesis. Its function is as follows. Master enzyme that delivers sulfur to a number of partners involved in Fe-S cluster assembly, tRNA modification or cofactor biosynthesis. Catalyzes the removal of elemental sulfur atoms from cysteine to produce alanine. Functions as a sulfur delivery protein for Fe-S cluster synthesis onto IscU, an Fe-S scaffold assembly protein, as well as other S acceptor proteins. This Acinetobacter baumannii (strain SDF) protein is Cysteine desulfurase IscS.